Consider the following 157-residue polypeptide: Spore germination protein GerT (157 aa).

The protein localises to the spore coat. Its function is as follows. Involved in spore germination; probably required at the earliest stage of germination. The polypeptide is Spore germination protein GerT (gerT) (Bacillus subtilis (strain 168)).